An 89-amino-acid chain; its full sequence is MSLNAETKAAIVAEYAQCENDTGSPEVQVALLTAQINHLQGHFANHKHDHHSRRGLLRMVSRRRKLLDYLKGKNLDRYQDLIKRQGLRR.

The protein belongs to the universal ribosomal protein uS15 family. Part of the 30S ribosomal subunit. Forms a bridge to the 50S subunit in the 70S ribosome, contacting the 23S rRNA.

Functionally, one of the primary rRNA binding proteins, it binds directly to 16S rRNA where it helps nucleate assembly of the platform of the 30S subunit by binding and bridging several RNA helices of the 16S rRNA. Its function is as follows. Forms an intersubunit bridge (bridge B4) with the 23S rRNA of the 50S subunit in the ribosome. The sequence is that of Small ribosomal subunit protein uS15 from Photobacterium profundum (strain SS9).